A 90-amino-acid chain; its full sequence is UPF0298 protein SSU98_1559 (90 aa).

Belongs to the UPF0298 family.

It localises to the cytoplasm. This is UPF0298 protein SSU98_1559 from Streptococcus suis (strain 98HAH33).